The following is a 203-amino-acid chain: Histidine biosynthesis bifunctional protein HisIE (203 aa).

The interval 1-114 (MLTEQQRREL…FGDASHQWLF (114 aa)) is phosphoribosyl-AMP cyclohydrolase. Residues 115-203 (LYQLEQLLAE…VIDNLRKRHQ (89 aa)) are phosphoribosyl-ATP pyrophosphohydrolase.

The protein in the N-terminal section; belongs to the PRA-CH family. In the C-terminal section; belongs to the PRA-PH family.

The protein localises to the cytoplasm. The enzyme catalyses 1-(5-phospho-beta-D-ribosyl)-ATP + H2O = 1-(5-phospho-beta-D-ribosyl)-5'-AMP + diphosphate + H(+). It catalyses the reaction 1-(5-phospho-beta-D-ribosyl)-5'-AMP + H2O = 1-(5-phospho-beta-D-ribosyl)-5-[(5-phospho-beta-D-ribosylamino)methylideneamino]imidazole-4-carboxamide. It functions in the pathway amino-acid biosynthesis; L-histidine biosynthesis; L-histidine from 5-phospho-alpha-D-ribose 1-diphosphate: step 2/9. The protein operates within amino-acid biosynthesis; L-histidine biosynthesis; L-histidine from 5-phospho-alpha-D-ribose 1-diphosphate: step 3/9. In Salmonella typhimurium (strain LT2 / SGSC1412 / ATCC 700720), this protein is Histidine biosynthesis bifunctional protein HisIE (hisI).